The following is a 357-amino-acid chain: tRNA/tmRNA (uracil-C(5))-methyltransferase (357 aa).

Residues Gln-180, Tyr-209, Asn-214, Glu-230, and Asp-290 each coordinate S-adenosyl-L-methionine. The Nucleophile role is filled by Cys-315. The active-site Proton acceptor is Glu-349.

This sequence belongs to the class I-like SAM-binding methyltransferase superfamily. RNA M5U methyltransferase family. TrmA subfamily.

It catalyses the reaction uridine(54) in tRNA + S-adenosyl-L-methionine = 5-methyluridine(54) in tRNA + S-adenosyl-L-homocysteine + H(+). It carries out the reaction uridine(341) in tmRNA + S-adenosyl-L-methionine = 5-methyluridine(341) in tmRNA + S-adenosyl-L-homocysteine + H(+). Functionally, dual-specificity methyltransferase that catalyzes the formation of 5-methyluridine at position 54 (m5U54) in all tRNAs, and that of position 341 (m5U341) in tmRNA (transfer-mRNA). This Campylobacter jejuni subsp. jejuni serotype O:23/36 (strain 81-176) protein is tRNA/tmRNA (uracil-C(5))-methyltransferase.